Reading from the N-terminus, the 372-residue chain is Chorismate synthase (372 aa).

The NADP(+) site is built by arginine 48 and arginine 54. Residues 125–127 (RSS), 238–239 (NA), glycine 278, 293–297 (KPTSS), and arginine 319 each bind FMN.

This sequence belongs to the chorismate synthase family. As to quaternary structure, homotetramer. Requires FMNH2 as cofactor.

The catalysed reaction is 5-O-(1-carboxyvinyl)-3-phosphoshikimate = chorismate + phosphate. The protein operates within metabolic intermediate biosynthesis; chorismate biosynthesis; chorismate from D-erythrose 4-phosphate and phosphoenolpyruvate: step 7/7. Catalyzes the anti-1,4-elimination of the C-3 phosphate and the C-6 proR hydrogen from 5-enolpyruvylshikimate-3-phosphate (EPSP) to yield chorismate, which is the branch point compound that serves as the starting substrate for the three terminal pathways of aromatic amino acid biosynthesis. This reaction introduces a second double bond into the aromatic ring system. The sequence is that of Chorismate synthase from Xylella fastidiosa (strain M23).